The chain runs to 603 residues: Polypeptide N-acetylgalactosaminyltransferase 9 (603 aa).

Over 1–6 (MAVARK) the chain is Cytoplasmic. A helical; Signal-anchor for type II membrane protein transmembrane segment spans residues 7 to 29 (IRTLLTVNILVFVGIVLFSVYCR). Topologically, residues 30–603 (LQGRSQELVR…IRNWIKHARH (574 aa)) are lumenal. Cystine bridges form between Cys141–Cys372 and Cys363–Cys442. The segment at 150–261 (LPQVSVVFIF…TGWAEPALSR (112 aa)) is catalytic subdomain A. 2 residues coordinate substrate: Asp191 and Arg222. Asp245, His247, and His377 together coordinate Mn(2+). Residues 318–380 (PIRTPAMIGC…PCSRVAHIER (63 aa)) form a catalytic subdomain B region. Positions 380 and 385 each coordinate substrate. The N-linked (GlcNAc...) asparagine glycan is linked to Asn460. The region spanning 464–600 (TYGEVRNSKA…KWMIRNWIKH (137 aa)) is the Ricin B-type lectin domain. 3 disulfide bridges follow: Cys477–Cys493, Cys525–Cys540, and Cys567–Cys587.

The protein belongs to the glycosyltransferase 2 family. GalNAc-T subfamily. Mn(2+) serves as cofactor. In terms of tissue distribution, specifically expressed in brain. Not expressed in heart, placenta, lung, liver, skeletal muscle, kidney, pancreas, spleen, thymus, prostate, testis, ovary, small intestine, colon and leukocyte. In brain, it is expressed in cerebellum, frontal lobe, temporal lobe, putamen and spinal cord, weakly expressed in cerebral cortex. Not expressed in medulla and occipital pole.

It is found in the golgi apparatus membrane. The enzyme catalyses L-seryl-[protein] + UDP-N-acetyl-alpha-D-galactosamine = a 3-O-[N-acetyl-alpha-D-galactosaminyl]-L-seryl-[protein] + UDP + H(+). It catalyses the reaction L-threonyl-[protein] + UDP-N-acetyl-alpha-D-galactosamine = a 3-O-[N-acetyl-alpha-D-galactosaminyl]-L-threonyl-[protein] + UDP + H(+). It participates in protein modification; protein glycosylation. In terms of biological role, catalyzes the initial reaction in O-linked oligosaccharide biosynthesis, the transfer of an N-acetyl-D-galactosamine residue to a serine or threonine residue on the protein receptor. Does not glycosylate apomucin or SDC3. In Homo sapiens (Human), this protein is Polypeptide N-acetylgalactosaminyltransferase 9 (GALNT9).